The chain runs to 385 residues: Cytochrome b (385 aa).

The Mitochondrial matrix portion of the chain corresponds to 1–27 (MAFRKSNVYLSLVNSYIIDSPQPSSIN). Tyrosine 16 provides a ligand contact to a ubiquinone. Residues 28–51 (YWWNMGSLLGLCLVIQIVTGIFMA) form a helical membrane-spanning segment. At 52-74 (MHYSSNIELAFSSVEHIMRDVHN) the chain is on the mitochondrial intermembrane side. Residues 75–102 (GYILRYLHANGASFFFMVMFMHMAKGLY) form a helical membrane-spanning segment. The heme b site is built by histidine 82 and histidine 96. The Mitochondrial matrix segment spans residues 103–110 (YGSYRSPR). The chain crosses the membrane as a helical span at residues 111–135 (VTLWNVGVIIFILTIATAFLGYCCV). Residues 136 to 172 (YGQMSHWGATVITNLFSAIPFVGNDIVSWLWGGFSVS) are Mitochondrial intermembrane-facing. A helical membrane pass occupies residues 173 to 204 (NPTIQRFFALHYLVPFIIAAMVIMHLMALHIH). The heme b site is built by histidine 183 and histidine 197. Residue histidine 202 coordinates a ubiquinone. Topologically, residues 205 to 223 (GSSNPLGITGNLDRIPMHS) are mitochondrial matrix. Residues 224-246 (YFIFKDLVTVFLFMLILALFVFY) form a helical membrane-spanning segment. Topologically, residues 247 to 287 (SPNTLGHPDNYIPGNPLVTPASIVPEWYLLPFYAILRSIPD) are mitochondrial intermembrane. A helical transmembrane segment spans residues 288-308 (KLLGVITMFAAILVLLVLPFT). Residues 309 to 319 (DRSVVRGNTFK) are Mitochondrial matrix-facing. Residues 320-340 (VLSKFFFFIFVFNFVLLGQIG) form a helical membrane-spanning segment. The Mitochondrial intermembrane segment spans residues 341-347 (ACHVEVP). A helical transmembrane segment spans residues 348-364 (YVLMGQIATFIYFAYFL). The Mitochondrial matrix segment spans residues 365–385 (IIVPVISTIENVLFYIGRVNK).

Belongs to the cytochrome b family. In terms of assembly, component of the ubiquinol-cytochrome c oxidoreductase (cytochrome b-c1 complex, complex III, CIII), a multisubunit enzyme composed of 10 subunits. The complex is composed of 3 respiratory subunits cytochrome b (COB), cytochrome c1 (CYT1) and Rieske protein (RIP1), 2 core protein subunits COR1 and QCR2, and 5 low-molecular weight protein subunits QCR6, QCR7, QCR8, QCR9 and QCR10. The complex exists as an obligatory dimer and forms supercomplexes (SCs) in the inner mitochondrial membrane with a monomer or a dimer of cytochrome c oxidase (complex IV, CIV), resulting in 2 different assemblies (supercomplexes III(2)IV and III(2)IV(2)). Heme b is required as a cofactor.

Its subcellular location is the mitochondrion inner membrane. It carries out the reaction a quinol + 2 Fe(III)-[cytochrome c](out) = a quinone + 2 Fe(II)-[cytochrome c](out) + 2 H(+)(out). Its function is as follows. Component of the ubiquinol-cytochrome c oxidoreductase, a multisubunit transmembrane complex that is part of the mitochondrial electron transport chain which drives oxidative phosphorylation. The respiratory chain contains 3 multisubunit complexes succinate dehydrogenase (complex II, CII), ubiquinol-cytochrome c oxidoreductase (cytochrome b-c1 complex, complex III, CIII) and cytochrome c oxidase (complex IV, CIV), that cooperate to transfer electrons derived from NADH and succinate to molecular oxygen, creating an electrochemical gradient over the inner membrane that drives transmembrane transport and the ATP synthase. The cytochrome b-c1 complex catalyzes electron transfer from ubiquinol to cytochrome c, linking this redox reaction to translocation of protons across the mitochondrial inner membrane, with protons being carried across the membrane as hydrogens on the quinol. In the process called Q cycle, 2 protons are consumed from the matrix, 4 protons are released into the intermembrane space and 2 electrons are passed to cytochrome c. Cytochrome b is a catalytic core subunit containing 2 b-type hemes BL and BH topographically segregated in the quinone reduction (Qi) and quinol oxidation (Q0) sites on opposite sides of the membrane. The protein is Cytochrome b (COB) of Saccharomyces cerevisiae (strain ATCC 204508 / S288c) (Baker's yeast).